Here is a 313-residue protein sequence, read N- to C-terminus: Porphobilinogen deaminase (313 aa).

An S-(dipyrrolylmethanemethyl)cysteine modification is found at Cys-242.

The protein belongs to the HMBS family. As to quaternary structure, monomer. It depends on dipyrromethane as a cofactor.

It catalyses the reaction 4 porphobilinogen + H2O = hydroxymethylbilane + 4 NH4(+). It functions in the pathway porphyrin-containing compound metabolism; protoporphyrin-IX biosynthesis; coproporphyrinogen-III from 5-aminolevulinate: step 2/4. In terms of biological role, tetrapolymerization of the monopyrrole PBG into the hydroxymethylbilane pre-uroporphyrinogen in several discrete steps. In Proteus mirabilis (strain HI4320), this protein is Porphobilinogen deaminase.